Reading from the N-terminus, the 251-residue chain is Small ribosomal subunit protein uS2 (251 aa).

The protein belongs to the universal ribosomal protein uS2 family.

This chain is Small ribosomal subunit protein uS2, found in Cereibacter sphaeroides (strain ATCC 17029 / ATH 2.4.9) (Rhodobacter sphaeroides).